The following is a 363-amino-acid chain: Dihydroorotate dehydrogenase (quinone) (363 aa).

FMN-binding positions include 67–71 (AGLDK) and T91. Residue K71 participates in substrate binding. Substrate is bound at residue 116-120 (NRMGF). N145 and N178 together coordinate FMN. N178 contributes to the substrate binding site. S181 functions as the Nucleophile in the catalytic mechanism. N183 is a substrate binding site. K219 and T247 together coordinate FMN. 248-249 (NT) contacts substrate. FMN-binding positions include G268, G297, and 318–319 (YT).

The protein belongs to the dihydroorotate dehydrogenase family. Type 2 subfamily. Monomer. Requires FMN as cofactor.

Its subcellular location is the cell membrane. It catalyses the reaction (S)-dihydroorotate + a quinone = orotate + a quinol. It functions in the pathway pyrimidine metabolism; UMP biosynthesis via de novo pathway; orotate from (S)-dihydroorotate (quinone route): step 1/1. Its function is as follows. Catalyzes the conversion of dihydroorotate to orotate with quinone as electron acceptor. In Myxococcus xanthus (strain DK1622), this protein is Dihydroorotate dehydrogenase (quinone).